The primary structure comprises 442 residues: D-serine dehydratase (442 aa).

N6-(pyridoxal phosphate)lysine is present on lysine 118.

This sequence belongs to the serine/threonine dehydratase family. DsdA subfamily. In terms of assembly, monomer. The cofactor is pyridoxal 5'-phosphate.

It carries out the reaction D-serine = pyruvate + NH4(+). The sequence is that of D-serine dehydratase from Shigella sonnei (strain Ss046).